We begin with the raw amino-acid sequence, 363 residues long: NAD(P)H-quinone oxidoreductase subunit 1, chloroplastic (363 aa).

6 consecutive transmembrane segments (helical) span residues 30 to 50 (LVPILTLVLAITIGVLVIVWL), 104 to 124 (IAVISIILSYSVIPFSYHLVL), 127 to 147 (LGIGVFLWIAVSSIAPIGLLM), 253 to 273 (FGLFYVASYLNLLVSSLFVTV), 300 to 320 (VFGTTMGMFITLAKTYLFLFI), and 343 to 363 (FLLPISLGNLLLTTSFQLLSL).

This sequence belongs to the complex I subunit 1 family. NDH is composed of at least 16 different subunits, 5 of which are encoded in the nucleus.

The protein resides in the plastid. Its subcellular location is the chloroplast thylakoid membrane. It catalyses the reaction a plastoquinone + NADH + (n+1) H(+)(in) = a plastoquinol + NAD(+) + n H(+)(out). The enzyme catalyses a plastoquinone + NADPH + (n+1) H(+)(in) = a plastoquinol + NADP(+) + n H(+)(out). Functionally, NDH shuttles electrons from NAD(P)H:plastoquinone, via FMN and iron-sulfur (Fe-S) centers, to quinones in the photosynthetic chain and possibly in a chloroplast respiratory chain. The immediate electron acceptor for the enzyme in this species is believed to be plastoquinone. Couples the redox reaction to proton translocation, and thus conserves the redox energy in a proton gradient. The sequence is that of NAD(P)H-quinone oxidoreductase subunit 1, chloroplastic from Piper cenocladum (Ant piper).